A 298-amino-acid polypeptide reads, in one-letter code: ADP-ribosyl cyclase/cyclic ADP-ribose hydrolase 1 (298 aa).

Residues M1–Q21 are Cytoplasmic-facing. Residues V22–V42 traverse the membrane as a helical; Signal-anchor for type II membrane protein segment. Over L43–M298 the chain is Extracellular. 3 disulfides stabilise this stretch: C64–C80, C97–C178, and C158–C171. N98 carries N-linked (GlcNAc...) asparagine glycosylation. C117 is a catalytic residue. An N-linked (GlcNAc...) asparagine glycan is attached at N118. N177 carries N-linked (GlcNAc...) asparagine glycosylation. C199 is an active-site residue. N-linked (GlcNAc...) asparagine glycosylation is found at N207 and N268. 2 disulfide bridges follow: C252-C273 and C285-C294.

This sequence belongs to the ADP-ribosyl cyclase family. As to quaternary structure, homodimer. As to expression, osteoclasts.

Its subcellular location is the cell membrane. It is found in the microsome membrane. The protein localises to the endoplasmic reticulum membrane. The enzyme catalyses NAD(+) = cyclic ADP-beta-D-ribose + nicotinamide + H(+). It carries out the reaction 2'-phospho-cyclic ADP-ribose + nicotinate = nicotinate-adenine dinucleotide phosphate. The catalysed reaction is NAD(+) + H2O = ADP-D-ribose + nicotinamide + H(+). It catalyses the reaction nicotinate + NADP(+) = nicotinate-adenine dinucleotide phosphate + nicotinamide. Functionally, synthesizes cyclic ADP-ribose (cADPR), a second messenger for glucose-induced insulin secretion. Synthesizes the Ca(2+) mobilizer nicotinate-adenine dinucleotide phosphate, NAADP(+), from 2'-phospho-cADPR and nicotinic acid, as well as from NADP(+) and nicotinic acid. Also has cADPR hydrolase activity. The polypeptide is ADP-ribosyl cyclase/cyclic ADP-ribose hydrolase 1 (CD38) (Oryctolagus cuniculus (Rabbit)).